The primary structure comprises 1065 residues: Inversin (1065 aa).

ANK repeat units follow at residues 13–42, 47–76, 80–110, 113–144, 148–177, 181–213, 220–250, 254–283, 288–317, 321–350, 356–385, 389–418, 422–451, 455–484, 488–517, and 523–553; these read SLAS…ALKD, FGRT…DVNK, SQRT…WMQK, EEMT…EVDT, NKQT…NIGI, EGKI…TESL, EGRT…NITS, LFRT…SGTI, QGAT…VKDD, EGRT…DIDI, YGGT…QVDA, MKHT…RVDL, DGHS…NPNV, AGRT…DPNI, EGRT…FPNQ, and ERYT…SIAA. Asparagine 75 carries the post-translational modification 3-hydroxyasparagine. The D-box 1 signature appears at 490–498; sequence RTALHWSCN. The 30-residue stretch at 555 to 584 folds into the IQ 1 domain; the sequence is QDIAAFKIQAVYKGYKVRKAFRDRKNLLMK. Residues 589–616 are compositionally biased toward basic and acidic residues; it reads RKDAAAKKREEENKRKEAEQQKGRRSPD. Disordered stretches follow at residues 589 to 833 and 847 to 886; these read RKDA…TPRN and HLPQ…PLSG. Polar residues predominate over residues 627–640; that stretch reads PSTQDVPSRQSRAP. Position 661 is a phosphoserine (serine 661). Positions 677–686 are enriched in polar residues; that stretch reads SSDLQGTNSR. Composition is skewed to basic and acidic residues over residues 687–697, 706–715, 723–736, 752–762, 770–786, and 853–863; these read RPNETAREHSK, RPNEGSDGSR, EKSR…ERCA, GPDEKGEDSRR, HDSH…EPKA, and EELRSGARRLE. The short motif at 909–917 is the D-box 2 element; that stretch reads RKELFRKKN. The IQ 2 domain occupies 916–945; it reads KNKAAAVIQRAWRSYQLRKHLSHLRHMKQL. The disordered stretch occupies residues 976–999; it reads TTAVSKAPKSPSKGTSGTKSTKHS. Positions 983–994 are enriched in low complexity; sequence PKSPSKGTSGTK.

In terms of assembly, binds calmodulin via its IQ domains. Interacts with APC2. Interacts with alpha-, beta-, and gamma-catenin. Interacts with N-cadherin (CDH2). Interacts with microtubules. Interacts with NPHP1. Interacts with DVL1, PRICKLE (PRICKLE1 or PRICKLE2) and Strabismus (VANGL1 or VANGL2). Interacts with IQCB1; the interaction likely requires additional interactors. Component of a complex containing at least ANKS6, INVS, NEK8 and NPHP3. ANKS6 may organize complex assembly by linking INVS and NPHP3 to NEK8 and INVS may target the complex to the proximal ciliary axoneme. May be ubiquitinated via its interaction with APC2. Post-translationally, hydroxylated at Asn-75, most probably by HIF1AN. In terms of tissue distribution, widely expressed. Strongly expressed in the primary cilia of renal tubular cells.

Its subcellular location is the cytoplasm. It is found in the cytoskeleton. The protein localises to the spindle. It localises to the membrane. The protein resides in the nucleus. Its subcellular location is the cell projection. It is found in the cilium. Its function is as follows. Required for normal renal development and establishment of left-right axis. Probably acts as a molecular switch between different Wnt signaling pathways. Inhibits the canonical Wnt pathway by targeting cytoplasmic disheveled (DVL1) for degradation by the ubiquitin-proteasome. This suggests that it is required in renal development to oppose the repression of terminal differentiation of tubular epithelial cells by Wnt signaling. Involved in the organization of apical junctions in kidney cells together with NPHP1, NPHP4 and RPGRIP1L/NPHP8. Does not seem to be strictly required for ciliogenesis. The sequence is that of Inversin (INVS) from Homo sapiens (Human).